We begin with the raw amino-acid sequence, 750 residues long: von Willebrand factor A domain-containing protein DDB_G0292188 (750 aa).

The region spanning 17 to 249 is the VWFA domain; sequence EIKTVFNSDS…IKDDLLLDVV (233 aa). Low complexity-rich tracts occupy residues 586-595 and 603-645; these read SINDNNNSFN and PFFE…SSAS. The segment at 586–657 is disordered; it reads SINDNNNSFN…PPPSQMLNEQ (72 aa).

The protein is von Willebrand factor A domain-containing protein DDB_G0292188 of Dictyostelium discoideum (Social amoeba).